Consider the following 82-residue polypeptide: UPF0213 protein SSP2268 (82 aa).

A GIY-YIG domain is found at 2–77 (DKHYIYIVKC…KTFSRQKKLK (76 aa)).

Belongs to the UPF0213 family.

This chain is UPF0213 protein SSP2268, found in Staphylococcus saprophyticus subsp. saprophyticus (strain ATCC 15305 / DSM 20229 / NCIMB 8711 / NCTC 7292 / S-41).